The sequence spans 545 residues: Carboxypeptidase Y homolog A (545 aa).

The N-terminal stretch at M1–G18 is a signal peptide. Positions P19 to K125 are excised as a propeptide. Disulfide bonds link C179–C418, C313–C327, C337–C360, C344–C353, and C382–C388. N210 carries an N-linked (GlcNAc...) asparagine glycan. S266 is a catalytic residue. Residue D457 is part of the active site. Residues N487 and N507 are each glycosylated (N-linked (GlcNAc...) asparagine). H518 is an active-site residue.

This sequence belongs to the peptidase S10 family.

The protein localises to the vacuole. It carries out the reaction Release of a C-terminal amino acid with broad specificity.. In terms of biological role, vacuolar carboxypeptidase involved in degradation of small peptides. Digests preferentially peptides containing an aliphatic or hydrophobic residue in P1' position, as well as methionine, leucine or phenylalanine in P1 position of ester substrate. The protein is Carboxypeptidase Y homolog A (CPYA) of Ajellomyces capsulatus (strain NAm1 / WU24) (Darling's disease fungus).